A 159-amino-acid chain; its full sequence is Ribosomal RNA large subunit methyltransferase H (159 aa).

Residues L76, G108, and 127 to 132 (FGLLTL) contribute to the S-adenosyl-L-methionine site.

It belongs to the RNA methyltransferase RlmH family. In terms of assembly, homodimer.

The protein resides in the cytoplasm. The enzyme catalyses pseudouridine(1915) in 23S rRNA + S-adenosyl-L-methionine = N(3)-methylpseudouridine(1915) in 23S rRNA + S-adenosyl-L-homocysteine + H(+). Specifically methylates the pseudouridine at position 1915 (m3Psi1915) in 23S rRNA. This is Ribosomal RNA large subunit methyltransferase H from Leuconostoc citreum (strain KM20).